We begin with the raw amino-acid sequence, 351 residues long: LIM/homeobox protein ceh-14 (351 aa).

LIM zinc-binding domains lie at 46–105 (AICS…KFGT) and 105–169 (TKCS…ARDK). Positions 180-239 (NKRPRTTISAKSLETLKQAYQTSSKPARHVREQLASETGLDMRVVQVWFQNRRAKEKRLK) form a DNA-binding region, homeobox. Basic and acidic residues predominate over residues 238-254 (LKKDAGRRWKSSNRAES). The tract at residues 238-268 (LKKDAGRRWKSSNRAESDSNSPIESINGQSP) is disordered. Residues 255–268 (DSNSPIESINGQSP) are compositionally biased toward polar residues.

As to quaternary structure, interacts (via LIM zinc-binding domains 1 and 2) with lim-7 (via LID domain). May interact with itself. May interact with homeobox protein ceh-63. As to expression, expressed in the anterior AFDL/R sensory neurons and BDUL/R and ALA interneurons, and in PVT, PVQL/R, DVC, PVNL/R, PVWL/R, PVR, PHCL/R, PHAL/R and PHBL/R cells in the tail region.

The protein localises to the nucleus. In terms of biological role, probable transcription factor, modulating expression of helix-loop-helix protein mbr-1 and homeobox protein ceh-63, perhaps acting in concert with ceh-63. Binds to a motif including the sequence 5'-CTAAT-3' in regulatory promoter elements. Confers thermosensory function to neurons. Required for correct AFD-mediated thermotaxis. In concert with homeobox protein ttx-1, perhaps as components in a complex, specifies identity of AFD neurons, acting by synergistically regulating receptor-type guanylyl cyclase gcy-8, gcy-18 and other genes. Involved in postembryonic differentiation of the ALA neuron, and regulation of genes that contribute to behavioral quiescence, a sleep-like behavior mediated by ALA. Regulates its own expression and also that of homeodomain ceh-17, together forming an autoregulatory loop in the ALA neuron. Required for initial pathfinding of the ALA axons, but largely dispensable for axon migration. Involved in regulating postembryonic axon maintenance in the ventral nerve cord, acting in concert with LIM homeobox protein lim-6, via modulation of expression of immunoglobulin domain zig genes in the interneuron PVT. Plays a role in controlling the peptidergic identity of the BDU neurons, regulating expression of flp-10, nlp-1, and nlp-15, thereby modulating the harsh touch response. The protein is LIM/homeobox protein ceh-14 (ceh-14) of Caenorhabditis elegans.